Reading from the N-terminus, the 177-residue chain is Large ribosomal subunit protein uL6 (177 aa).

It belongs to the universal ribosomal protein uL6 family. As to quaternary structure, part of the 50S ribosomal subunit.

This protein binds to the 23S rRNA, and is important in its secondary structure. It is located near the subunit interface in the base of the L7/L12 stalk, and near the tRNA binding site of the peptidyltransferase center. This Janthinobacterium sp. (strain Marseille) (Minibacterium massiliensis) protein is Large ribosomal subunit protein uL6.